The sequence spans 1538 residues: Myosin-9 (1538 aa).

One can recognise a Myosin N-terminal SH3-like domain in the interval 16-65 (SIGSHVWFEDPEVAWIDGEVEKINGQEVVIQATTGKKVTAKLSKIYPKDV). Residues 70-740 (GGVDDMTKLS…QMAELDARRA (671 aa)) enclose the Myosin motor domain. Residues 164-171 (GESGAGKT) and 217-225 (NNNSSRFGK) contribute to the ATP site. 4 actin-binding regions span residues 503-537 (LIEKKPGGIVALLDEACMFPKSTHETFANKLYQTF), 539-562 (THKRFIKPKLSRTDFAVAHYAGEV), 597-621 (FPPLPEETSKSSKFSSIGSRFKLQL), and 621-643 (LQQLMETLNCTEPHYIRCVKPNN). 6 consecutive IQ domains span residues 743 to 772 (LSSAAKKIQRRIRTHQAQKRFIVLRKATIS), 766 to 795 (LRKATISLQAICRGRLSCKHYDNLRREAAA), 791 to 820 (REAAAVKIQKNGRRHYSRKSYKKLHVASLV), 814 to 843 (LHVASLVVQTGLRAMAARKQFRFRKQTKAA), 839 to 868 (QTKAATIVQAQWRCHRAISYYKKLKNGVVL), and 862 to 891 (LKNGVVLSQTRWRGRLAKRELRKLKMAARE). The stretch at 892 to 1064 (TGALKEAKDM…VLRQQAVSMA (173 aa)) forms a coiled coil. Positions 1017 to 1032 (SLEDKKKKLEETEKKG) are enriched in basic and acidic residues. Disordered regions lie at residues 1017–1041 (SLEDKKKKLEETEKKGQQLQESLTR) and 1098–1121 (SHSINHRDPSEVEDKPQKSLNEKQ). Residues 1168–1481 (DRIIQTIGHA…IANMRVLMTE (314 aa)) form the Dilute domain.

This sequence belongs to the TRAFAC class myosin-kinesin ATPase superfamily. Myosin family. Plant myosin class XI subfamily. In terms of assembly, homodimer.

Its function is as follows. Myosin heavy chain that is required for the cell cycle-regulated transport of various organelles and proteins for their segregation. Functions by binding with its tail domain to receptor proteins on organelles and exerting force with its N-terminal motor domain against actin filaments, thereby transporting its cargo along polarized actin cables. Involved in trafficking of Golgi stacks and mitochondria. This is Myosin-9 (XI-C) from Arabidopsis thaliana (Mouse-ear cress).